The following is a 189-amino-acid chain: Probable UbiX-like flavin prenyltransferase (189 aa).

Residues 9-11 (GAS), Ser-36, 87-90 (SMKT), and Arg-122 contribute to the FMN site.

This sequence belongs to the UbiX/PAD1 family. YclB subfamily. In terms of assembly, homododecamer.

It catalyses the reaction dimethylallyl phosphate + FMNH2 = prenylated FMNH2 + phosphate. Involved in the non-oxidative decarboxylation and detoxification of phenolic derivatives under anaerobic conditions. Flavin prenyltransferase that catalyzes the synthesis of the prenylated FMN cofactor (prenyl-FMN) for phenolic acid decarboxylase. This chain is Probable UbiX-like flavin prenyltransferase, found in Sedimentibacter hydroxybenzoicus (Clostridium hydroxybenzoicum).